The sequence spans 76 residues: Exodeoxyribonuclease 7 small subunit (76 aa).

This sequence belongs to the XseB family. In terms of assembly, heterooligomer composed of large and small subunits.

The protein localises to the cytoplasm. The enzyme catalyses Exonucleolytic cleavage in either 5'- to 3'- or 3'- to 5'-direction to yield nucleoside 5'-phosphates.. Its function is as follows. Bidirectionally degrades single-stranded DNA into large acid-insoluble oligonucleotides, which are then degraded further into small acid-soluble oligonucleotides. The protein is Exodeoxyribonuclease 7 small subunit of Gluconacetobacter diazotrophicus (strain ATCC 49037 / DSM 5601 / CCUG 37298 / CIP 103539 / LMG 7603 / PAl5).